We begin with the raw amino-acid sequence, 337 residues long: B1 bradykinin receptor (337 aa).

The Extracellular segment spans residues Met1–Gly41. Residues Asn13 and Asn21 are each glycosylated (N-linked (GlcNAc...) asparagine). Residues Phe42–Leu62 traverse the membrane as a helical segment. At Leu63–Glu83 the chain is on the cytoplasmic side. Residues Ile84 to Ala104 form a helical membrane-spanning segment. Residues Glu105 to Arg121 lie on the Extracellular side of the membrane. An intrachain disulfide couples Cys120 to Cys199. The helical transmembrane segment at Val122–Ser142 threads the bilayer. Over Gln143–Ala164 the chain is Cytoplasmic. A helical membrane pass occupies residues Gln165 to Leu185. Residues Arg186–Asn217 are Extracellular-facing. N-linked (GlcNAc...) asparagine glycosylation occurs at Asn195. Residues Val218 to Ser238 form a helical membrane-spanning segment. Topologically, residues Leu239 to Leu261 are cytoplasmic. The helical transmembrane segment at Ile262 to Leu282 threads the bilayer. The Extracellular portion of the chain corresponds to Asp283–Gln305. The helical transmembrane segment at Leu306 to Gly326 threads the bilayer. Residues Arg327 to Leu337 lie on the Cytoplasmic side of the membrane.

It belongs to the G-protein coupled receptor 1 family. Bradykinin receptor subfamily. BDKRB1 sub-subfamily. Expressed in bladder, lung, duodenum, kidney, uterus, thymus, salivary gland, testis, prostate, macrophages, aorta, spleen and heart.

The protein resides in the cell membrane. This is a receptor for bradykinin. Could be a factor in chronic pain and inflammation. The protein is B1 bradykinin receptor (Bdkrb1) of Rattus norvegicus (Rat).